The following is a 239-amino-acid chain: Dolichyldiphosphatase (239 aa).

Residues 1-34 (MNSTAAAINPNPNVIPFDDTYILYDSHDFLSFLS) are Lumenal-facing. A helical membrane pass occupies residues 35-55 (AYFSLMPILVLAFYLSWFIIT). The Cytoplasmic portion of the chain corresponds to 56-131 (RELEACIVAF…KIYTSWKNLN (76 aa)). The helical transmembrane segment at 132–152 (FLEKCIFSGALALLSFCVCFS) threads the bilayer. The Lumenal segment spans residues 153 to 164 (RVYLHYHNLDQV). Residues 165–185 (IVGFSVGALTGSLYFFIVGII) form a helical membrane-spanning segment. At 186–239 (RELGLINWFLKLRIVRLFYMTDSYNLAPLTLKENYEAYWKRINQRSFNDKSKRD) the chain is on the cytoplasmic side.

It belongs to the dolichyldiphosphatase family.

Its subcellular location is the endoplasmic reticulum membrane. The enzyme catalyses a di-trans,poly-cis-dolichyl diphosphate + H2O = a di-trans,poly-cis-dolichyl phosphate + phosphate + H(+). The protein operates within protein modification; protein glycosylation. In terms of biological role, non-essential protein which is required for efficient N-glycosylation. Necessary for maintaining optimal levels of dolichol-linked oligosaccharides. Hydrolyzes dolichyl pyrophosphate at a very high rate and dolichyl monophosphate at a much lower rate. Does not act on phosphatidate. This chain is Dolichyldiphosphatase (CAX4), found in Saccharomyces cerevisiae (strain ATCC 204508 / S288c) (Baker's yeast).